The chain runs to 479 residues: Ribulose bisphosphate carboxylase large chain 2 (479 aa).

Residues asparagine 116 and threonine 166 each coordinate substrate. Lysine 168 functions as the Proton acceptor in the catalytic mechanism. Position 170 (lysine 170) interacts with substrate. Positions 194, 196, and 197 each coordinate Mg(2+). Lysine 194 bears the N6-carboxylysine mark. Histidine 287 acts as the Proton acceptor in catalysis. Residues arginine 288, histidine 320, and serine 372 each coordinate substrate.

The protein belongs to the RuBisCO large chain family. Type I subfamily. Heterohexadecamer of 8 large chains and 8 small chains. Mg(2+) is required as a cofactor.

The enzyme catalyses 2 (2R)-3-phosphoglycerate + 2 H(+) = D-ribulose 1,5-bisphosphate + CO2 + H2O. It catalyses the reaction D-ribulose 1,5-bisphosphate + O2 = 2-phosphoglycolate + (2R)-3-phosphoglycerate + 2 H(+). Functionally, ruBisCO catalyzes two reactions: the carboxylation of D-ribulose 1,5-bisphosphate, the primary event in carbon dioxide fixation, as well as the oxidative fragmentation of the pentose substrate. Both reactions occur simultaneously and in competition at the same active site. This is Ribulose bisphosphate carboxylase large chain 2 from Bradyrhizobium sp. (strain ORS 278).